Here is a 575-residue protein sequence, read N- to C-terminus: Cytochrome P450 monooxygenase opaB (575 aa).

A glycan (N-linked (GlcNAc...) asparagine) is linked at Asn6. The chain crosses the membrane as a helical span at residues 37-57; that stretch reads FILAAILASIILLIIRNSMLS. Asn83 and Asn242 each carry an N-linked (GlcNAc...) asparagine glycan. Cys521 contributes to the heme binding site.

It belongs to the cytochrome P450 family. Heme is required as a cofactor.

It localises to the membrane. It participates in secondary metabolite biosynthesis. Functionally, cytochrome P450 monooxygenase; part of the gene cluster that mediates the biosynthesis of oxepinamides, derivatives of anthranilyl-containing tripeptides that share an oxepin ring and a fused pyrimidinone moiety. The nonribosomal peptide synthetase (NRPS) opaA assembles the quinazolinone core with D-Phe incorporation. The first adenylation domain (A1) of opaA loads and activates anthranilic acid whereas the second A domain (A2) is for activating of L-Phe, which is then converted to D-form by the E domain. The third A domain (A3) is responsible for L-Ile activation and the terminal condensation domain C3 for cyclization and releasing the NRPS product protuboxepin K. The cytochrome P450 monooxygenase opaB then catalyzes alone the oxepin ring formation to convert protuboxepin K into protuboxepin A. The flavoenzyme opaC installs subsequently one hydroxyl group at the oxepin ring, accompanied by double bond migration, to form 15-epi-oxepinamide E. The epimerase opaE changes the D-Phe residue back to L-form, leading to oxepinamide E, which is further methylated at the hydroxyl group at C-12 by the O-methyltransferase OpaF to yield oxepinamide F. The sequence is that of Cytochrome P450 monooxygenase opaB from Aspergillus ustus.